A 488-amino-acid chain; its full sequence is Monodehydroascorbate reductase 4, peroxisomal (488 aa).

The Cytoplasmic segment spans residues 1–3 (MGR). The chain crosses the membrane as a helical span at residues 4–24 (AFVYVILGGGVAAGYAALEFT). Residues 12–15 (GGVA), Glu-39, Arg-46, Lys-51, and 145–146 (RD) each bind FAD. Over 25 to 458 (RRGVSDGELC…SASVVMIKKP (434 aa)) the chain is Peroxisomal. NAD(+) is bound by residues 170 to 176 (GGYIGME), Glu-194, Arg-200, and Gly-259. NADP(+) is bound at residue 172–176 (YIGME). NADP(+)-binding residues include Arg-200 and Gly-259. Asp-296 provides a ligand contact to FAD. NAD(+) is bound at residue 312–313 (EH). NADP(+) is bound at residue 312–313 (EH). Val-314 serves as a coordination point for FAD. Arg-318 contributes to the L-ascorbate binding site. Tyr-344 is an FAD binding site. Tyr-344 provides a ligand contact to NAD(+). NADP(+) is bound at residue Tyr-344. Arg-346 provides a ligand contact to L-ascorbate. The chain crosses the membrane as a helical span at residues 459 to 479 (LYVWHAATGVVVAASVAAFAF). Residues 480–488 (WYGRRRRRW) lie on the Cytoplasmic side of the membrane.

This sequence belongs to the FAD-dependent oxidoreductase family. The cofactor is FAD.

It is found in the peroxisome membrane. It catalyses the reaction 2 monodehydro-L-ascorbate radical + NADH + H(+) = 2 L-ascorbate + NAD(+). Catalyzes the conversion of monodehydroascorbate to ascorbate, oxidizing NADH in the process. Involved in the detoxification of H(2)O(2) that escapes the peroxisome and causes oxidative damage to oil bodies. This chain is Monodehydroascorbate reductase 4, peroxisomal, found in Arabidopsis thaliana (Mouse-ear cress).